A 500-amino-acid polypeptide reads, in one-letter code: NAD(P)H-quinone oxidoreductase chain 4, chloroplastic (500 aa).

A run of 12 helical transmembrane segments spans residues 4–24, 37–57, 80–100, 134–154, 167–187, 208–228, 242–262, 272–292, 330–350, 386–406, 416–436, and 462–482; these read FPWLTAILLLPISAGSSILFI, ICICLLELLLMTYVFYYNFQL, LGIDGLSIGPILLTGFITTLA, LLLFFIMWELELIPVYLLLSM, FILYTAGGSIFLLIGVLGMGL, GLEILFYFGFLIAYAAKPPII, HYSTCMLLAGILLKMGAYGLV, AHSLFSPWLVIVGTLQIIYAA, GAILQIISHGFIGAALFFLAG, LASPGMSGFVAEFLVFLGIIT, ILITVVMAIGMILTPIYLLSM, and IFILISILLPVMGIGIYPDFV.

Belongs to the complex I subunit 4 family.

Its subcellular location is the plastid. The protein resides in the chloroplast thylakoid membrane. It catalyses the reaction a plastoquinone + NADH + (n+1) H(+)(in) = a plastoquinol + NAD(+) + n H(+)(out). The catalysed reaction is a plastoquinone + NADPH + (n+1) H(+)(in) = a plastoquinol + NADP(+) + n H(+)(out). The protein is NAD(P)H-quinone oxidoreductase chain 4, chloroplastic of Amborella trichopoda.